A 375-amino-acid polypeptide reads, in one-letter code: 4,4'-diaponeurosporenoate glycosyltransferase (375 aa).

A run of 4 helical transmembrane segments spans residues 3 to 23, 164 to 184, 277 to 297, and 330 to 350; these read WLSRILTVIVTMSMACGALIF, FYEGFSAIFNLMTVVGMNVFS, IMTAIVLWLFGSIASILGLCL, and FSNLLMVCHPLLFMFFTKIFI.

The protein belongs to the glycosyltransferase 2 family. CrtQ subfamily.

Its subcellular location is the cell membrane. It participates in carotenoid biosynthesis; staphyloxanthin biosynthesis; staphyloxanthin from farnesyl diphosphate: step 4/5. Functionally, catalyzes the glycosylation of 4,4'-diaponeurosporenoate, i.e. the esterification of glucose at the C1'' position with the carboxyl group of 4,4'-diaponeurosporenic acid, to form glycosyl-4,4'-diaponeurosporenoate. This is a step in the biosynthesis of staphyloxanthin, an orange pigment present in most staphylococci strains. The protein is 4,4'-diaponeurosporenoate glycosyltransferase (crtQ) of Staphylococcus aureus (strain Mu50 / ATCC 700699).